The following is a 96-amino-acid chain: Protein Vpr (96 aa).

The segment at 1–42 (MEQAPEDQGPQREPYNDWTLELLEELKNEAVRHFPRIWLHSL) is homooligomerization. 3 positions are modified to phosphoserine; by host: Ser-79, Ser-94, and Ser-96.

The protein belongs to the HIV-1 VPR protein family. Homooligomer, may form homodimer. Interacts with p6-gag region of the Pr55 Gag precursor protein through a (Leu-X-X)4 motif near the C-terminus of the P6gag protein. Interacts with host UNG. May interact with host RAD23A/HHR23A. Interacts with host VPRBP/DCAF1, leading to hijack the CUL4A-RBX1-DDB1-DCAF1/VPRBP complex, mediating ubiquitination of host proteins such as TERT and ZGPAT and arrest of the cell cycle in G2 phase. In terms of processing, phosphorylated on several residues by host. These phosphorylations regulate VPR activity for the nuclear import of the HIV-1 pre-integration complex.

Its subcellular location is the virion. The protein localises to the host nucleus. It localises to the host extracellular space. Its function is as follows. During virus replication, may deplete host UNG protein, and incude G2-M cell cycle arrest. Acts by targeting specific host proteins for degradation by the 26S proteasome, through association with the cellular CUL4A-DDB1 E3 ligase complex by direct interaction with host VPRPB/DCAF-1. Cell cycle arrest reportedly occurs within hours of infection and is not blocked by antiviral agents, suggesting that it is initiated by the VPR carried into the virion. Additionally, VPR induces apoptosis in a cell cycle dependent manner suggesting that these two effects are mechanistically linked. Detected in the serum and cerebrospinal fluid of AIDS patient, VPR may also induce cell death to bystander cells. Functionally, during virus entry, plays a role in the transport of the viral pre-integration (PIC) complex to the host nucleus. This function is crucial for viral infection of non-dividing macrophages. May act directly at the nuclear pore complex, by binding nucleoporins phenylalanine-glycine (FG)-repeat regions. In Human immunodeficiency virus type 1 group M subtype B (strain 89.6) (HIV-1), this protein is Protein Vpr.